The following is a 504-amino-acid chain: Kinesin light chain 3 (504 aa).

A coiled-coil region spans residues 90–150; sequence ALSAHVGALE…EEEKRHLEFL (61 aa). Residues 153–197 are disordered; sequence LRQYDPPAESQQSESPPRRDSLASLFPSEEEERKGPEAAGAAAAQ. Low complexity predominate over residues 158 to 167; the sequence is PPAESQQSES. Ser-173 carries the phosphoserine modification. TPR repeat units lie at residues 207-240, 249-282, 291-324, 333-366, and 375-408; these read LRTL…LERS, ATML…REQT, AATL…REKV, AKQL…YEAL, and AKTK…EDLP. A disordered region spans residues 411–438; sequence LGAPNTGTAGDAEQALRRSSSLSKIRES. The residue at position 466 (Ser-466) is a Phosphoserine. The residue at position 498 (Thr-498) is a Phosphothreonine. Ser-502 bears the Phosphoserine mark.

This sequence belongs to the kinesin light chain family. As to quaternary structure, oligomer composed of two heavy chains and two light chains. Associates with microtubulin in an ATP-dependent manner. Interacts with KIF5C. Interacts with ODF1. Interacts with LRGUK. Interacts with VDAC2.

Its subcellular location is the cytoplasm. It localises to the cytoskeleton. The protein localises to the mitochondrion. Its function is as follows. Kinesin is a microtubule-associated force-producing protein that may play a role in organelle transport. Plays a role during spermiogenesis in the development of the sperm tail midpiece and in the normal function of spermatozoa. May play a role in the formation of the mitochondrial sheath formation in the developing spermatid midpiece. In Pongo abelii (Sumatran orangutan), this protein is Kinesin light chain 3 (KLC3).